Reading from the N-terminus, the 907-residue chain is Clathrin coat assembly protein AP180 (907 aa).

Residues 14–145 (QYSVTGSAVA…FSYRQMAFDF (132 aa)) form the ENTH domain. 4 disordered regions span residues 285–326 (LEGK…DTSP), 342–380 (TSKPSSDLLDLQPDFSSGGAAAAAAPAPPPPAGGATAWG), 393–414 (SVPSEAQISDPFAPEPTPPTTT), and 505–525 (VPVVTPTASTAPPVPATAPSP). Ser296, Ser300, and Ser306 each carry phosphoserine. Residues 302–324 (LSKSSPATTVTSPNSTPAKTIDT) show a composition bias toward polar residues. O-linked (GlcNAc) threonine glycosylation is present at Thr310. Phosphoserine is present on Ser313. The residue at position 317 (Thr317) is a Phosphothreonine. Residues 505-515 (VPVVTPTASTA) show a composition bias toward low complexity. Residues 516–525 (PPVPATAPSP) show a composition bias toward pro residues. Phosphoserine occurs at positions 596, 602, 623, 629, and 763. Arg865 is subject to Asymmetric dimethylarginine; alternate. The residue at position 865 (Arg865) is an Omega-N-methylarginine; alternate. The disordered stretch occupies residues 867 to 907 (PFGAAAVPGTQLSPSPTPASQSPKKPPAKDPLADLNIKDFL). Over residues 893 to 907 (PAKDPLADLNIKDFL) the composition is skewed to basic and acidic residues.

This sequence belongs to the PICALM/SNAP91 family. As to quaternary structure, binds AP2A2. Interacts with AP2B1; clathrin competes with SNAP91. Thr-310 can be modified by the addition of N-acetylglucosamine which can be further phosphorylated. There is no evidence for direct Thr-310 phosphorylation.

The protein resides in the cell membrane. It localises to the membrane. Its subcellular location is the coated pit. Its function is as follows. Adaptins are components of the adapter complexes which link clathrin to receptors in coated vesicles. Clathrin-associated protein complexes are believed to interact with the cytoplasmic tails of membrane proteins, leading to their selection and concentration. Binding of AP180 to clathrin triskelia induces their assembly into 60-70 nm coats. This is Clathrin coat assembly protein AP180 (SNAP91) from Homo sapiens (Human).